We begin with the raw amino-acid sequence, 331 residues long: 4-hydroxythreonine-4-phosphate dehydrogenase (331 aa).

Residues H136 and T137 each contribute to the substrate site. H166, H211, and H266 together coordinate a divalent metal cation. Substrate-binding residues include K274, N283, and R292.

The protein belongs to the PdxA family. As to quaternary structure, homodimer. The cofactor is Zn(2+). Mg(2+) is required as a cofactor. Co(2+) serves as cofactor.

It is found in the cytoplasm. It catalyses the reaction 4-(phosphooxy)-L-threonine + NAD(+) = 3-amino-2-oxopropyl phosphate + CO2 + NADH. It participates in cofactor biosynthesis; pyridoxine 5'-phosphate biosynthesis; pyridoxine 5'-phosphate from D-erythrose 4-phosphate: step 4/5. In terms of biological role, catalyzes the NAD(P)-dependent oxidation of 4-(phosphooxy)-L-threonine (HTP) into 2-amino-3-oxo-4-(phosphooxy)butyric acid which spontaneously decarboxylates to form 3-amino-2-oxopropyl phosphate (AHAP). This chain is 4-hydroxythreonine-4-phosphate dehydrogenase, found in Thioalkalivibrio sulfidiphilus (strain HL-EbGR7).